Here is a 143-residue protein sequence, read N- to C-terminus: Transcriptional regulator MraZ (143 aa).

SpoVT-AbrB domains are found at residues 5–47 and 76–119; these read TYTP…PRDE and TDEQ…DAQA.

This sequence belongs to the MraZ family. In terms of assembly, forms oligomers.

The protein localises to the cytoplasm. Its subcellular location is the nucleoid. This Mycolicibacterium smegmatis (strain ATCC 700084 / mc(2)155) (Mycobacterium smegmatis) protein is Transcriptional regulator MraZ.